The sequence spans 581 residues: Serine/threonine-protein kinase SSN3 (581 aa).

Positions 34-57 (LWSQQQQQQLLDTKGSASTSKSPM) are disordered. Over residues 48 to 57 (GSASTSKSPM) the composition is skewed to polar residues. The 391-residue stretch at 85-475 (YEIIGYIAAG…AIDALEHEYF (391 aa)) folds into the Protein kinase domain. ATP contacts are provided by residues 91 to 99 (IAAGTYGKV) and K195. D298 acts as the Proton acceptor in catalysis.

The protein belongs to the protein kinase superfamily. CMGC Ser/Thr protein kinase family. CDC2/CDKX subfamily. Component of the SRB8-11 complex, a regulatory module of the Mediator complex. Mg(2+) is required as a cofactor.

It localises to the nucleus. The enzyme catalyses L-seryl-[protein] + ATP = O-phospho-L-seryl-[protein] + ADP + H(+). It catalyses the reaction L-threonyl-[protein] + ATP = O-phospho-L-threonyl-[protein] + ADP + H(+). It carries out the reaction [DNA-directed RNA polymerase] + ATP = phospho-[DNA-directed RNA polymerase] + ADP + H(+). In terms of biological role, component of the SRB8-11 complex. The SRB8-11 complex is a regulatory module of the Mediator complex which is itself involved in regulation of basal and activated RNA polymerase II-dependent transcription. The SRB8-11 complex may be involved in the transcriptional repression of a subset of genes regulated by Mediator. It may inhibit the association of the Mediator complex with RNA polymerase II to form the holoenzyme complex. The SRB8-11 complex phosphorylates the C-terminal domain (CTD) of the largest subunit of RNA polymerase II. This is Serine/threonine-protein kinase SSN3 (SSN3) from Eremothecium gossypii (strain ATCC 10895 / CBS 109.51 / FGSC 9923 / NRRL Y-1056) (Yeast).